Reading from the N-terminus, the 834-residue chain is MAVKKNKEDNSEERQYSTLTKDILKRVDHISIENELRESYLTYAMSVIVSRALPDVRDGLKPVHRRILYAMYDANLTHDKPYKKSAATVGEVLARYHPHGDAAVYGTMVRMAQDFSMRYLLVDGQGNFGSIDDDPPAAMRYTEARMTRFAEEMLNDIEKETVKFVPNFDDSRTEPSVLPATVPQLLVNGSMGIAIGMATNMPPHNLKEVVNAIVYYIDHQDAEIKDLMRYVQGPDFPTAGIIYGKEGIKEAYTTGKGRIKLRARLEVEETKRDREAIVVKELPYGVVKTTLHEKIADLVKQGKIEGVADIRDESSNRAGIRLIIELKKGVATQIVLNQLWKHTDLETTFGIINLALVNGEPKVLNLKELIKYFVDHRVEVITKRTEYDLNQAKAKAHILEGLLIAQANIEEVIRIIRESENTDAARTTLMNRFKLSEKQAQAILDMPLKRLTALEKLKIEQELQQLREFIAYCEDLLAHPEKILAVIKDELKKISEKYGDDRRSEIIGKTNDTEIDEEDLIHDEDVAVSITTQGFIKRVPASSYRTQGRGGVGVQGGKSQGEHYIEHLFVASTKDYLFIFTDRGKAFWMKVHEIPALSKISQGKSIKFILNLAPEEKITSYFTVSEFDPKQSIIMVTKMGTIKKMELKHLENAKKRGILALTLENNDELVAVSPVQTGDDFIMTTAAGLALRITEEKIRKMGRAAAGVKGISLDDDDICVSGNAIHKGESLIVITENGIGKRLSSKQFNVKGRGGKGQIYIKPDNKTGNVVSVKTVGDKDEIMVVTTDDMTIKIKADSIPELGRNAKGVKIVNISDGARVSDLAVVPADNEEKK.

In terms of domain architecture, Topo IIA-type catalytic spans 53–520; the sequence is LPDVRDGLKP…NDTEIDEEDL (468 aa). Y141 (O-(5'-phospho-DNA)-tyrosine intermediate) is an active-site residue. The GyrA-box motif lies at 547–553; the sequence is QGRGGVG.

This sequence belongs to the type II topoisomerase GyrA/ParC subunit family. As to quaternary structure, heterotetramer, composed of two GyrA and two GyrB chains. In the heterotetramer, GyrA contains the active site tyrosine that forms a transient covalent intermediate with DNA, while GyrB binds cofactors and catalyzes ATP hydrolysis.

The protein localises to the cytoplasm. The catalysed reaction is ATP-dependent breakage, passage and rejoining of double-stranded DNA.. A type II topoisomerase that negatively supercoils closed circular double-stranded (ds) DNA in an ATP-dependent manner to modulate DNA topology and maintain chromosomes in an underwound state. Negative supercoiling favors strand separation, and DNA replication, transcription, recombination and repair, all of which involve strand separation. Also able to catalyze the interconversion of other topological isomers of dsDNA rings, including catenanes and knotted rings. Type II topoisomerases break and join 2 DNA strands simultaneously in an ATP-dependent manner. This is DNA gyrase subunit A from Brachyspira hyodysenteriae (strain ATCC 49526 / WA1).